The primary structure comprises 76 residues: uncharacterized protein (76 aa).

It to M.jannaschii MJ0857 N-terminal region.

This is an uncharacterized protein from Methanocaldococcus jannaschii (strain ATCC 43067 / DSM 2661 / JAL-1 / JCM 10045 / NBRC 100440) (Methanococcus jannaschii).